The primary structure comprises 366 residues: Acetylserotonin O-methyltransferase 3 (366 aa).

Gly209, Asp232, Asp253, and Lys267 together coordinate S-adenosyl-L-homocysteine. His271 serves as the catalytic Proton acceptor. Residues Glu302 and Glu332 contribute to the active site.

It belongs to the class I-like SAM-binding methyltransferase superfamily. Cation-independent O-methyltransferase family. As to quaternary structure, homodimer. Expressed at low levels in roots, shoots, leaves, stems and flowers.

It is found in the cytoplasm. It catalyses the reaction N-acetylserotonin + S-adenosyl-L-methionine = melatonin + S-adenosyl-L-homocysteine + H(+). Its pathway is aromatic compound metabolism; melatonin biosynthesis; melatonin from serotonin: step 1/2. Methyltransferase which catalyzes the transfer of a methyl group onto N-acetylserotonin, producing melatonin (N-acetyl-5-methoxytryptamine). The sequence is that of Acetylserotonin O-methyltransferase 3 from Oryza sativa subsp. japonica (Rice).